Reading from the N-terminus, the 332-residue chain is Autoinducer 2 import system permease protein LsrD (332 aa).

Helical transmembrane passes span 7 to 27 (YSWE…FGLI), 45 to 65 (ICIG…GMDI), 70 to 90 (TIGL…PLPL), 91 to 111 (AIII…GLII), 118 to 138 (LVIT…LSGM), 162 to 182 (FLGI…FWLL), 216 to 236 (VYAM…SYFG), 240 to 260 (SDLG…GGAN), 261 to 281 (IYGG…VGFL), and 288 to 308 (AGVP…VVVV).

The protein belongs to the binding-protein-dependent transport system permease family. AraH/RbsC subfamily. In terms of assembly, the complex is composed of two ATP-binding proteins (LsrA), two transmembrane proteins (LsrC and LsrD) and a solute-binding protein (LsrB).

It localises to the cell inner membrane. Part of the ABC transporter complex LsrABCD involved in autoinducer 2 (AI-2) import. Probably responsible for the translocation of the substrate across the membrane. This is Autoinducer 2 import system permease protein LsrD (lsrD) from Salmonella paratyphi B (strain ATCC BAA-1250 / SPB7).